A 457-amino-acid chain; its full sequence is DNA repair protein RadA (457 aa).

The C4-type zinc-finger motif lies at 12–29 (CQACGYESAKWMGKCPNC). 97–104 (GDPGIGKS) is an ATP binding site. The RadA KNRFG motif motif lies at 254 to 258 (KNRFG). The segment at 353–457 (DAYLKAAGGV…GEALKKALPD (105 aa)) is lon-protease-like.

It belongs to the RecA family. RadA subfamily.

Its function is as follows. DNA-dependent ATPase involved in processing of recombination intermediates, plays a role in repairing DNA breaks. Stimulates the branch migration of RecA-mediated strand transfer reactions, allowing the 3' invading strand to extend heteroduplex DNA faster. Binds ssDNA in the presence of ADP but not other nucleotides, has ATPase activity that is stimulated by ssDNA and various branched DNA structures, but inhibited by SSB. Does not have RecA's homology-searching function. The sequence is that of DNA repair protein RadA from Listeria monocytogenes serovar 1/2a (strain ATCC BAA-679 / EGD-e).